The following is a 513-amino-acid chain: V-type proton ATPase subunit B, kidney isoform (513 aa).

Arginine 394 provides a ligand contact to ATP. Residues 510-513 carry the PDZ-binding motif; that stretch reads DTAL.

This sequence belongs to the ATPase alpha/beta chains family. As to quaternary structure, V-ATPase is a heteromultimeric enzyme made up of two complexes: the ATP-hydrolytic V1 complex and the proton translocation V0 complex. The V1 complex consists of three catalytic AB heterodimers that form a heterohexamer, three peripheral stalks each consisting of EG heterodimers, one central rotor including subunits D and F, and the regulatory subunits C and H. The proton translocation complex V0 consists of the proton transport subunit a, a ring of proteolipid subunits c9c'', rotary subunit d, subunits e and f, and the accessory subunits ATP6AP1/Ac45 and ATP6AP2/PRR. Forms a complex with NHERF1 and SCL4A7. As to expression, kidney; localizes to early distal nephron, encompassing thick ascending limbs and distal convoluted tubules (at protein level). Expressed in the cochlea and endolymphatic sac.

It is found in the apical cell membrane. Its subcellular location is the basolateral cell membrane. In terms of biological role, non-catalytic subunit of the V1 complex of vacuolar(H+)-ATPase (V-ATPase), a multisubunit enzyme composed of a peripheral complex (V1) that hydrolyzes ATP and a membrane integral complex (V0) that translocates protons. V-ATPase is responsible for acidifying and maintaining the pH of intracellular compartments and in some cell types, is targeted to the plasma membrane, where it is responsible for acidifying the extracellular environment. Essential for the proper assembly and activity of V-ATPase. In renal intercalated cells, mediates secretion of protons (H+) into the urine thereby ensuring correct urinary acidification. Required for optimal olfactory function by mediating the acidification of the nasal olfactory epithelium. This is V-type proton ATPase subunit B, kidney isoform (ATP6V1B1) from Homo sapiens (Human).